Consider the following 1054-residue polypeptide: Trehalose synthase complex regulatory subunit TPS3 (1054 aa).

The segment at 112-133 (AANSGIPPANNPVSSGSTAQRP) is disordered. Residues 122–132 (NPVSSGSTAQR) are compositionally biased toward polar residues. Phosphoserine is present on residues Ser148, Ser150, and Ser181. 2 disordered regions span residues 155 to 203 (ASSI…PVSK) and 223 to 250 (QQQA…SSSN). The segment covering 170-182 (LSSSLMKNPNLSF) has biased composition (polar residues). Residues 235–249 (SGSTAGDSSIASSSS) are compositionally biased toward low complexity. A Phosphothreonine modification is found at Thr265. A phosphoserine mark is found at Ser267 and Ser273. The tract at residues 287–778 (KFGGYSNNAK…SNQETSTVFN (492 aa)) is glycosyltransferase. Position 960 is a phosphoserine (Ser960).

In the N-terminal section; belongs to the glycosyltransferase 20 family. As to quaternary structure, the trehalose synthase complex is composed of the two catalytic subunits TPS1 and TPS2 and at least one of the two regulatory subunits TPS3 or TSL1.

The protein localises to the cytoplasm. Regulatory subunit of the trehalose synthase complex that catalyzes the production of trehalose from glucose-6-phosphate and UDP-glucose in a two step process. May stabilize the trehalose synthase complex. The protein is Trehalose synthase complex regulatory subunit TPS3 (TPS3) of Saccharomyces cerevisiae (strain ATCC 204508 / S288c) (Baker's yeast).